The following is a 667-amino-acid chain: Transketolase (667 aa).

Position 27 (H27) interacts with substrate. Residues H67 and G115–L117 each bind thiamine diphosphate. D156 contributes to the Mg(2+) binding site. 2 residues coordinate thiamine diphosphate: G157 and N186. Mg(2+) contacts are provided by N186 and I188. Positions 262, 357, and 384 each coordinate substrate. A thiamine diphosphate-binding site is contributed by H262. E411 acts as the Proton donor in catalysis. F437 lines the thiamine diphosphate pocket. The substrate site is built by H461, D469, and R520.

This sequence belongs to the transketolase family. In terms of assembly, homodimer. Mg(2+) is required as a cofactor. Requires Ca(2+) as cofactor. It depends on Mn(2+) as a cofactor. Co(2+) serves as cofactor. The cofactor is thiamine diphosphate.

The enzyme catalyses D-sedoheptulose 7-phosphate + D-glyceraldehyde 3-phosphate = aldehydo-D-ribose 5-phosphate + D-xylulose 5-phosphate. In terms of biological role, catalyzes the transfer of a two-carbon ketol group from a ketose donor to an aldose acceptor, via a covalent intermediate with the cofactor thiamine pyrophosphate. The sequence is that of Transketolase (tkt) from Bacillus subtilis (strain 168).